A 674-amino-acid chain; its full sequence is DNA mismatch repair protein MutL (674 aa).

This sequence belongs to the DNA mismatch repair MutL/HexB family.

In terms of biological role, this protein is involved in the repair of mismatches in DNA. It is required for dam-dependent methyl-directed DNA mismatch repair. May act as a 'molecular matchmaker', a protein that promotes the formation of a stable complex between two or more DNA-binding proteins in an ATP-dependent manner without itself being part of a final effector complex. This is DNA mismatch repair protein MutL from Clostridium perfringens (strain ATCC 13124 / DSM 756 / JCM 1290 / NCIMB 6125 / NCTC 8237 / Type A).